Consider the following 216-residue polypeptide: Probable transaldolase (216 aa).

The active-site Schiff-base intermediate with substrate is the Lys-83.

Belongs to the transaldolase family. Type 3B subfamily.

The protein localises to the cytoplasm. It catalyses the reaction D-sedoheptulose 7-phosphate + D-glyceraldehyde 3-phosphate = D-erythrose 4-phosphate + beta-D-fructose 6-phosphate. The protein operates within carbohydrate degradation; pentose phosphate pathway; D-glyceraldehyde 3-phosphate and beta-D-fructose 6-phosphate from D-ribose 5-phosphate and D-xylulose 5-phosphate (non-oxidative stage): step 2/3. Transaldolase is important for the balance of metabolites in the pentose-phosphate pathway. The polypeptide is Probable transaldolase (Shouchella clausii (strain KSM-K16) (Alkalihalobacillus clausii)).